A 947-amino-acid chain; its full sequence is Protocadherin alpha-4 (947 aa).

Residues 1 to 29 (MEFSWGSGQESRRLLLLLLLLSAWEAGNG) form the signal peptide. Cadherin domains are found at residues 30-133 (QLHY…PPVF), 134-242 (PATQ…APAF), 243-350 (DRTI…VPDL), 351-455 (EFKS…APAF), 456-565 (AQPE…APAL), and 588-678 (DHVV…APKA). Residues 30-697 (QLHYSVSEEA…GPDAALVDVN (668 aa)) are Extracellular-facing. Residues Cys96 and Cys102 are joined by a disulfide bond. 3 N-linked (GlcNAc...) asparagine glycosylation sites follow: Asn139, Asn257, and Asn265. The N-linked (GlcNAc...) asparagine glycan is linked to Asn548. The chain crosses the membrane as a helical span at residues 698–718 (VYLIIAICAVSSLLVLTLLLY). Topologically, residues 719-947 (TALRCSAPPT…GNSTTDNSDQ (229 aa)) are cytoplasmic. PXXP repeat units lie at residues 734–737 (PGKP), 774–777 (PSLP), 796–799 (PRQP), 829–832 (PGGP), 870–873 (PGNP), and 888–891 (PGSP). The interval 734 to 891 (PGKPTLVCSS…PDKFIIPGSP (158 aa)) is 6 X 4 AA repeats of P-X-X-P. Residues 738-947 (TLVCSSAVGS…GNSTTDNSDQ (210 aa)) are required for interaction with FYN. 2 disordered regions span residues 754–805 (RRPR…DWRY) and 828–853 (GPGG…EVSP). A disordered region spans residues 892–947 (AIISIRQEPANSQIDKSDFITFGKKEETKKKKKKKKGNKTQEKKEKGNSTTDNSDQ). Over residues 906–920 (DKSDFITFGKKEETK) the composition is skewed to basic and acidic residues.

In terms of assembly, forms homodimers in trans (molecules expressed by two different cells). Forms promiscuous heterodimers in cis (at the plasma membrane of the same cell) with other protocadherins. Interacts with FYN.

The protein resides in the cell membrane. Functionally, calcium-dependent cell-adhesion protein involved in cells self-recognition and non-self discrimination. Thereby, it is involved in the establishment and maintenance of specific neuronal connections in the brain. This Pan troglodytes (Chimpanzee) protein is Protocadherin alpha-4.